We begin with the raw amino-acid sequence, 306 residues long: ADP-polyphosphate phosphotransferase 2 (306 aa).

Belongs to the polyphosphate kinase 2 (PPK2) family. Class I subfamily.

The catalysed reaction is [phosphate](n) + ATP = [phosphate](n+1) + ADP. It carries out the reaction [phosphate](n) + GTP = [phosphate](n+1) + GDP. Uses inorganic polyphosphate (polyP) as a donor to convert ADP to ATP. Can also convert GDP to GTP, with lower efficiency. The chain is ADP-polyphosphate phosphotransferase 2 from Rhizobium meliloti (strain 1021) (Ensifer meliloti).